Reading from the N-terminus, the 767-residue chain is Protein NLP3 (767 aa).

3 disordered regions span residues 462 to 494, 590 to 622, and 646 to 672; these read ATPPLTQEDPKGKQVSFSFSSASSLENRKRKTK, INPTQTVHVPPKSPPSSSGSQSSSGSSTCCSSE, and HEDQRPVRVTSSLPPLPSATTPRKAKD. The RWP-RK domain occupies 482 to 566; the sequence is SASSLENRKR…MDSVEGVQGS (85 aa). Residues 485 to 506 are a coiled coil; sequence SLENRKRKTKAEKDITLDTLRQ. 2 stretches are compositionally biased toward low complexity: residues 604 to 622 and 655 to 667; these read PSSSGSQSSSGSSTCCSSE and TSSLPPLPSATTP. Residues 673-759 enclose the PB1 domain; it reads GMKVKAMFGD…ETIRILVHHP (87 aa).

The protein localises to the nucleus. Its function is as follows. Probable transcription factor. The protein is Protein NLP3 (NLP3) of Arabidopsis thaliana (Mouse-ear cress).